The primary structure comprises 358 residues: MKKLLIMAAGTGGHIFPGLAIADTMQARGWEVTWLGTEHGMERDLVPKSGIAMDTISFAGLRGKGLRHTVTGVLRLLASFGTCFSILARRKPGVVLGMGGYVTVPGGWMAKLRGVPLVLLNADAALLLSNKALTPIAQRVLFGFPADFGNAADKALVTGNPVRAEISALMPPAQRYAQHSGALKILVVGGSLGAQALNAALPAALALIPAEQRPLVTHQSGKKNIDDLRARYAQAGVTAEVVDFIDDMPRRYADADLVICRAGAITVSELTAAGVASVLVPLLVSTTTHQRDNAHWMEQQQAAIHLPQSELTAQGLADLLQNMTREKCKQMAEAAYANGRRDANAAIADVLEKLVKNT.

Residues 11–13, R163, S191, I245, and Q290 contribute to the UDP-N-acetyl-alpha-D-glucosamine site; that span reads TGG.

Belongs to the glycosyltransferase 28 family. MurG subfamily.

It localises to the cell inner membrane. It catalyses the reaction di-trans,octa-cis-undecaprenyl diphospho-N-acetyl-alpha-D-muramoyl-L-alanyl-D-glutamyl-meso-2,6-diaminopimeloyl-D-alanyl-D-alanine + UDP-N-acetyl-alpha-D-glucosamine = di-trans,octa-cis-undecaprenyl diphospho-[N-acetyl-alpha-D-glucosaminyl-(1-&gt;4)]-N-acetyl-alpha-D-muramoyl-L-alanyl-D-glutamyl-meso-2,6-diaminopimeloyl-D-alanyl-D-alanine + UDP + H(+). It functions in the pathway cell wall biogenesis; peptidoglycan biosynthesis. Its function is as follows. Cell wall formation. Catalyzes the transfer of a GlcNAc subunit on undecaprenyl-pyrophosphoryl-MurNAc-pentapeptide (lipid intermediate I) to form undecaprenyl-pyrophosphoryl-MurNAc-(pentapeptide)GlcNAc (lipid intermediate II). The chain is UDP-N-acetylglucosamine--N-acetylmuramyl-(pentapeptide) pyrophosphoryl-undecaprenol N-acetylglucosamine transferase from Herminiimonas arsenicoxydans.